Reading from the N-terminus, the 390-residue chain is MFMFEKPHGMRDTLPGLYEAKKKVRSTLTDLIDKWGYQFMETPTLEFYETVGVQSAIEEQQLFKLLDQDGKTLVLRPDMTGPIARVAASKLHKHNHPLRAGYAASVYRAQEREGGRPAEFEQVGAELIGDGSTSADAEVIALAAGALKNAGLHRFKIAIGHAGLADELFVEVLGNAERADVLRRFLFEKNYVGYREHVKSLPLSSIDKSRLLALLELRGGKEICAKAEEIIGISGQSLIQELEDLWDILEDYGCAEHIRLDLNMVSHMSYYTGILFEVYAANVGFVIGSGGRYNNLLGHFGSPAPATGFGLRIDRLIEALGIQEETSEADAVIFSKEQRAQAILFAEEERARGRKVVLQDLAGIENIDHMTKSFANVTYFIGARKEEQNG.

It belongs to the class-II aminoacyl-tRNA synthetase family. HisZ subfamily. In terms of assembly, heteromultimer composed of HisG and HisZ subunits.

It localises to the cytoplasm. It functions in the pathway amino-acid biosynthesis; L-histidine biosynthesis; L-histidine from 5-phospho-alpha-D-ribose 1-diphosphate: step 1/9. Functionally, required for the first step of histidine biosynthesis. May allow the feedback regulation of ATP phosphoribosyltransferase activity by histidine. This Bacillus velezensis (strain DSM 23117 / BGSC 10A6 / LMG 26770 / FZB42) (Bacillus amyloliquefaciens subsp. plantarum) protein is ATP phosphoribosyltransferase regulatory subunit.